A 229-amino-acid chain; its full sequence is ATP synthase subunit a (229 aa).

A run of 6 helical transmembrane segments spans residues 16-36 (YAHV…GAAA), 81-101 (YIPF…LGMI), 110-130 (NMNT…FQGV), 142-162 (FMGP…VSHI), 175-195 (VMMG…IGVP), and 196-216 (IPFY…FTLL).

The protein belongs to the ATPase A chain family. In terms of assembly, F-type ATPases have 2 components, CF(1) - the catalytic core - and CF(0) - the membrane proton channel. CF(1) has five subunits: alpha(3), beta(3), gamma(1), delta(1), epsilon(1). CF(0) has three main subunits: a(1), b(2) and c(9-12). The alpha and beta chains form an alternating ring which encloses part of the gamma chain. CF(1) is attached to CF(0) by a central stalk formed by the gamma and epsilon chains, while a peripheral stalk is formed by the delta and b chains.

Its subcellular location is the cell inner membrane. In terms of biological role, key component of the proton channel; it plays a direct role in the translocation of protons across the membrane. The sequence is that of ATP synthase subunit a from Bdellovibrio bacteriovorus (strain ATCC 15356 / DSM 50701 / NCIMB 9529 / HD100).